The following is a 496-amino-acid chain: Transactivator/viroplasmin protein (496 aa).

Positions 102–128 (RPNQGIQIPKKNEDHSSSSSKEEKGIQ) are disordered. Basic and acidic residues predominate over residues 111 to 128 (KKNEDHSSSSSKEEKGIQ).

The protein belongs to the caulimoviridae viroplasmin family.

The protein localises to the host cytoplasm. Enhances the translation of downstream ORFs on polycistronic mRNAs derived from carnation etched ring virus. In Dianthus caryophyllus (Carnation), this protein is Transactivator/viroplasmin protein.